The primary structure comprises 415 residues: Peptide chain release factor subunit 1 (415 aa).

Belongs to the eukaryotic release factor 1 family. In terms of assembly, heterodimer of two subunits, one of which binds GTP.

It localises to the cytoplasm. In terms of biological role, directs the termination of nascent peptide synthesis (translation) in response to the termination codons UAA, UAG and UGA. The protein is Peptide chain release factor subunit 1 of Thermococcus sibiricus (strain DSM 12597 / MM 739).